Here is a 254-residue protein sequence, read N- to C-terminus: Methyltransferase-like protein 23 (254 aa).

A disordered region spans residues 1 to 27 (MKSFIFRQNPRKQQQEQNNLVDYSDSD). A compositionally biased stretch (polar residues) spans 11–21 (RKQQQEQNNLV).

It belongs to the methyltransferase superfamily. METTL23 family.

In terms of biological role, probable methyltransferase. The chain is Methyltransferase-like protein 23 from Dictyostelium discoideum (Social amoeba).